The primary structure comprises 74 residues: MGGISIWQLLIIVAIVVLLFGTKKLRTLGSDLGESVKGFKKAMAEEPKDAEFKSLDKAENTAQTKKEEKEKEQA.

Residues Met-1–Gly-21 form a helical membrane-spanning segment. The disordered stretch occupies residues Glu-45–Ala-74.

This sequence belongs to the TatA/E family. The Tat system comprises two distinct complexes: a TatABC complex, containing multiple copies of TatA, TatB and TatC subunits, and a separate TatA complex, containing only TatA subunits. Substrates initially bind to the TatABC complex, which probably triggers association of the separate TatA complex to form the active translocon.

The protein resides in the cell inner membrane. Functionally, part of the twin-arginine translocation (Tat) system that transports large folded proteins containing a characteristic twin-arginine motif in their signal peptide across membranes. TatA could form the protein-conducting channel of the Tat system. This is Sec-independent protein translocase protein TatA from Actinobacillus succinogenes (strain ATCC 55618 / DSM 22257 / CCUG 43843 / 130Z).